Reading from the N-terminus, the 75-residue chain is Tautomerase PptA (75 aa).

Pro2 serves as the catalytic Proton acceptor; via imino nitrogen.

It belongs to the 4-oxalocrotonate tautomerase family. PptA subfamily. In terms of assembly, homodimer.

The protein resides in the cytoplasm. This is Tautomerase PptA from Escherichia coli (strain SMS-3-5 / SECEC).